The primary structure comprises 413 residues: Glucose-1-phosphatase (413 aa).

The signal sequence occupies residues 1 to 22 (MKKSLLAVAVAGAVLLSSAVQA). Substrate is bound at residue Arg-39. His-40 serves as the catalytic Nucleophile. Positions 43, 116, and 218 each coordinate substrate. Asp-312 serves as the catalytic Proton donor.

It belongs to the histidine acid phosphatase family. As to quaternary structure, homodimer.

The protein localises to the periplasm. It carries out the reaction alpha-D-glucose 1-phosphate + H2O = D-glucose + phosphate. The sequence is that of Glucose-1-phosphatase (agp) from Salmonella typhimurium (strain LT2 / SGSC1412 / ATCC 700720).